Reading from the N-terminus, the 514-residue chain is Pentatricopeptide repeat-containing protein At4g26800 (514 aa).

PPR repeat units follow at residues D122 to P156, D157 to R191, D192 to P226, N227 to P261, N262 to P296, N297 to P331, N332 to A366, N367 to P401, N402 to L436, D437 to P471, and D472 to P510.

The protein belongs to the PPR family. P subfamily.

In Arabidopsis thaliana (Mouse-ear cress), this protein is Pentatricopeptide repeat-containing protein At4g26800.